The following is a 219-amino-acid chain: Ribose-5-phosphate isomerase A (219 aa).

Substrate-binding positions include 28–31 (TGST), 81–84 (DGAD), and 94–97 (KGGG). Glu103 functions as the Proton acceptor in the catalytic mechanism. Substrate is bound at residue Lys121.

It belongs to the ribose 5-phosphate isomerase family. Homodimer.

It carries out the reaction aldehydo-D-ribose 5-phosphate = D-ribulose 5-phosphate. It functions in the pathway carbohydrate degradation; pentose phosphate pathway; D-ribose 5-phosphate from D-ribulose 5-phosphate (non-oxidative stage): step 1/1. Its function is as follows. Catalyzes the reversible conversion of ribose-5-phosphate to ribulose 5-phosphate. This Shewanella frigidimarina (strain NCIMB 400) protein is Ribose-5-phosphate isomerase A.